Reading from the N-terminus, the 445-residue chain is Phosphoglucosamine mutase (445 aa).

The active-site Phosphoserine intermediate is Ser102. Positions 102, 241, 243, and 245 each coordinate Mg(2+). Phosphoserine is present on Ser102.

It belongs to the phosphohexose mutase family. It depends on Mg(2+) as a cofactor. Post-translationally, activated by phosphorylation.

It catalyses the reaction alpha-D-glucosamine 1-phosphate = D-glucosamine 6-phosphate. Functionally, catalyzes the conversion of glucosamine-6-phosphate to glucosamine-1-phosphate. This chain is Phosphoglucosamine mutase, found in Enterobacter sp. (strain 638).